The primary structure comprises 56 residues: Light-harvesting protein B-880 beta chain (56 aa).

The Cytoplasmic segment spans residues 1–22 (AEIDRPVSLSGLTEGEAREFHG). A bacteriochlorophyll contacts are provided by His-21 and His-39. The chain crosses the membrane as a helical span at residues 23–45 (VFMTSFMVFIAVAIVAHILAWMW). At 46 to 56 (RPWIPGPEGYA) the chain is on the periplasmic side.

It belongs to the antenna complex beta subunit family. In terms of assembly, the core complex is formed by different alpha and beta chains, binding bacteriochlorophyll molecules, and arranged most probably in tetrameric structures disposed around the reaction center. The non-pigmented gamma chains may constitute additional components.

The protein localises to the cell inner membrane. Functionally, antenna complexes are light-harvesting systems, which transfer the excitation energy to the reaction centers. The chain is Light-harvesting protein B-880 beta chain from Afifella marina (Rhodobium marinum).